A 150-amino-acid chain; its full sequence is UPF0208 membrane protein VS_0999 (150 aa).

The next 2 helical transmembrane spans lie at phenylalanine 42 to asparagine 62 and alanine 70 to asparagine 90.

Belongs to the UPF0208 family.

It is found in the cell inner membrane. The chain is UPF0208 membrane protein VS_0999 from Vibrio atlanticus (strain LGP32) (Vibrio splendidus (strain Mel32)).